The sequence spans 210 residues: ATP-dependent Clp protease proteolytic subunit (210 aa).

The Nucleophile role is filled by serine 113. Histidine 138 is an active-site residue.

It belongs to the peptidase S14 family. In terms of assembly, fourteen ClpP subunits assemble into 2 heptameric rings which stack back to back to give a disk-like structure with a central cavity, resembling the structure of eukaryotic proteasomes.

The protein localises to the cytoplasm. The enzyme catalyses Hydrolysis of proteins to small peptides in the presence of ATP and magnesium. alpha-casein is the usual test substrate. In the absence of ATP, only oligopeptides shorter than five residues are hydrolyzed (such as succinyl-Leu-Tyr-|-NHMec, and Leu-Tyr-Leu-|-Tyr-Trp, in which cleavage of the -Tyr-|-Leu- and -Tyr-|-Trp bonds also occurs).. Functionally, cleaves peptides in various proteins in a process that requires ATP hydrolysis. Has a chymotrypsin-like activity. Plays a major role in the degradation of misfolded proteins. The chain is ATP-dependent Clp protease proteolytic subunit from Marinomonas sp. (strain MWYL1).